Here is a 97-residue protein sequence, read N- to C-terminus: Ferredoxin-thioredoxin reductase, variable chain (97 aa).

It belongs to the ferredoxin thioredoxin reductase alpha subunit family. As to quaternary structure, heterodimer of subunit A (variable subunit) and subunit B (catalytic subunit). Heterodimeric FTR forms a complex with ferredoxin and thioredoxin.

The protein resides in the plastid. It is found in the chloroplast. Functionally, variable subunit of the ferredoxin-thioredoxin reductase (FTR), which catalyzes the two-electron reduction of thioredoxins by the electrons provided by reduced ferredoxin. This is Ferredoxin-thioredoxin reductase, variable chain from Zea mays (Maize).